The sequence spans 256 residues: Acetyl-coenzyme A carboxylase carboxyl transferase subunit alpha (256 aa).

The region spanning 1-236 is the CoA carboxyltransferase C-terminal domain; that stretch reads MTDVSRVLKE…KANLIEQITS (236 aa).

Belongs to the AccA family. As to quaternary structure, acetyl-CoA carboxylase is a heterohexamer composed of biotin carboxyl carrier protein (AccB), biotin carboxylase (AccC) and two subunits each of ACCase subunit alpha (AccA) and ACCase subunit beta (AccD).

Its subcellular location is the cytoplasm. The enzyme catalyses N(6)-carboxybiotinyl-L-lysyl-[protein] + acetyl-CoA = N(6)-biotinyl-L-lysyl-[protein] + malonyl-CoA. Its pathway is lipid metabolism; malonyl-CoA biosynthesis; malonyl-CoA from acetyl-CoA: step 1/1. Its function is as follows. Component of the acetyl coenzyme A carboxylase (ACC) complex. First, biotin carboxylase catalyzes the carboxylation of biotin on its carrier protein (BCCP) and then the CO(2) group is transferred by the carboxyltransferase to acetyl-CoA to form malonyl-CoA. This Streptococcus pyogenes serotype M2 (strain MGAS10270) protein is Acetyl-coenzyme A carboxylase carboxyl transferase subunit alpha.